The sequence spans 82 residues: UPF0298 protein SMU_1670c (82 aa).

It belongs to the UPF0298 family.

Its subcellular location is the cytoplasm. The chain is UPF0298 protein SMU_1670c from Streptococcus mutans serotype c (strain ATCC 700610 / UA159).